A 319-amino-acid chain; its full sequence is ATP-dependent 6-phosphofructokinase (319 aa).

Position 11 (Gly11) interacts with ATP. 21–25 contacts ADP; it reads RAAVR. Residues 72 to 73 and 102 to 105 each bind ATP; these read RS and GDGS. Residue Asp103 participates in Mg(2+) binding. 125 to 127 lines the substrate pocket; it reads TID. Residue Asp127 is the Proton acceptor of the active site. Arg154 is a binding site for ADP. Residues Arg162 and 169–171 each bind substrate; that span reads MGR. Residues 185 to 187, Arg211, and 213 to 215 contribute to the ADP site; these read GAE and KKH. Substrate contacts are provided by residues Glu222, Arg243, and 249–252; that span reads HIQR.

The protein belongs to the phosphofructokinase type A (PFKA) family. ATP-dependent PFK group I subfamily. Prokaryotic clade 'B1' sub-subfamily. In terms of assembly, homotetramer. The cofactor is Mg(2+).

It localises to the cytoplasm. The enzyme catalyses beta-D-fructose 6-phosphate + ATP = beta-D-fructose 1,6-bisphosphate + ADP + H(+). Its pathway is carbohydrate degradation; glycolysis; D-glyceraldehyde 3-phosphate and glycerone phosphate from D-glucose: step 3/4. Allosterically activated by ADP and other diphosphonucleosides, and allosterically inhibited by phosphoenolpyruvate. Functionally, catalyzes the phosphorylation of D-fructose 6-phosphate to fructose 1,6-bisphosphate by ATP, the first committing step of glycolysis. The chain is ATP-dependent 6-phosphofructokinase from Brevibacillus brevis (strain 47 / JCM 6285 / NBRC 100599).